We begin with the raw amino-acid sequence, 396 residues long: Phosphoglycerate kinase (396 aa).

Substrate is bound by residues 21 to 23 (DIN), R36, 59 to 62 (HFGR), R118, and R151. ATP-binding positions include K201, E323, and 353–356 (GGDT).

It belongs to the phosphoglycerate kinase family. Monomer.

The protein localises to the cytoplasm. The enzyme catalyses (2R)-3-phosphoglycerate + ATP = (2R)-3-phospho-glyceroyl phosphate + ADP. The protein operates within carbohydrate degradation; glycolysis; pyruvate from D-glyceraldehyde 3-phosphate: step 2/5. This is Phosphoglycerate kinase from Ruegeria sp. (strain TM1040) (Silicibacter sp.).